The primary structure comprises 403 residues: Pantothenate kinase (403 aa).

A phosphoserine mark is found at Ser-80, Ser-82, and Ser-84.

It belongs to the type II pantothenate kinase family.

The protein resides in the cytoplasm. It is found in the nucleus. The enzyme catalyses (R)-pantothenate + ATP = (R)-4'-phosphopantothenate + ADP + H(+). It functions in the pathway cofactor biosynthesis; coenzyme A biosynthesis; CoA from (R)-pantothenate: step 1/5. Its activity is regulated as follows. Regulated by feedback inhibition by malonyl-CoA. Functionally, plays a role in the physiological regulation of the intracellular CoA concentration. In Schizosaccharomyces pombe (strain 972 / ATCC 24843) (Fission yeast), this protein is Pantothenate kinase.